A 230-amino-acid chain; its full sequence is Demethylmenaquinone methyltransferase (230 aa).

S-adenosyl-L-methionine is bound by residues Thr57, Asp77, Asp101–Ile102, and Ser118.

Belongs to the class I-like SAM-binding methyltransferase superfamily. MenG/UbiE family.

The catalysed reaction is a 2-demethylmenaquinol + S-adenosyl-L-methionine = a menaquinol + S-adenosyl-L-homocysteine + H(+). The protein operates within quinol/quinone metabolism; menaquinone biosynthesis; menaquinol from 1,4-dihydroxy-2-naphthoate: step 2/2. Its function is as follows. Methyltransferase required for the conversion of demethylmenaquinol (DMKH2) to menaquinol (MKH2). The sequence is that of Demethylmenaquinone methyltransferase from Chlamydia felis (strain Fe/C-56) (Chlamydophila felis).